The primary structure comprises 1482 residues: Cystic fibrosis transmembrane conductance regulator (1482 aa).

Residues 1-77 (MQRSPLEKAS…KLINALRRCF (77 aa)) are Cytoplasmic-facing. The helical transmembrane segment at 78 to 98 (FWRFMFYGILLYLGEVTKAVQ) threads the bilayer. The ABC transmembrane type-1 1 domain occupies 81 to 365 (FMFYGILLYL…WAVQTWYDSL (285 aa)). At 99–122 (PLLLGRIIASYDPDNKVERSIAIY) the chain is on the extracellular side. A helical transmembrane segment spans residues 123 to 146 (LGIGLCLLFIVRTLLLHPAIFGLH). Residues 147–195 (HIGMQMRIAMFSLIYKKILKLSSRVLDKISIGQLVSLLSNNLNKFDEGL) are Cytoplasmic-facing. The chain crosses the membrane as a helical span at residues 196-216 (ALAHFVWIAPLQVTLLMGLLW). Residues 217–222 (ELLQAS) lie on the Extracellular side of the membrane. A helical transmembrane segment spans residues 223–243 (AFCGLGFLIVLALVQAGLGRM). Residues 244–298 (MMKYRDQRAGKINERLVITSEMIENIQSVKAYCWEEAMEKMIENLRQTELKLTRK) are Cytoplasmic-facing. The helical transmembrane segment at 299–319 (AAYVRYFNSSAFFFSGFFVVF) threads the bilayer. At 320–339 (LSVLPYALIKGIILRKIFTT) the chain is on the extracellular side. A helical membrane pass occupies residues 340-358 (ISFCIVLRMAVTRQFPWAV). The Cytoplasmic segment spans residues 359–859 (QTWYDSLGAI…YLRYLAVNKS (501 aa)). ATP is bound by residues Trp401, 458–465 (GSTGAGKT), and Gln493. Residues 423–646 (NGDNSLFFSN…RPDFSSKLMG (224 aa)) form the ABC transporter 1 domain. Cys524 carries the S-palmitoyl cysteine lipid modification. A phosphoserine mark is found at Ser549 and Ser660. Residues 654–832 (SAERRNSILT…EEINEEYLKE (179 aa)) are disordered R region. Phosphoserine; by PKA is present on Ser670. The residue at position 686 (Ser686) is a Phosphoserine. A Glycyl lysine isopeptide (Lys-Gly) (interchain with G-Cter in ubiquitin) cross-link involves residue Lys688. Phosphoserine is present on residues Ser700 and Ser712. Thr717 bears the Phosphothreonine mark. 5 positions are modified to phosphoserine: Ser738, Ser769, Ser791, Ser796, and Ser814. Residues 860–880 (LSLVLIWCLVIFLAEVAISLA) form a helical membrane-spanning segment. Positions 860–1156 (LSLVLIWCLV…AVNSSIDVDS (297 aa)) constitute an ABC transmembrane type-1 2 domain. Residues 881-919 (VLLLLDKSPRYSKGNGTASGNGSSAVIITSTSSYYLFYI) are Extracellular-facing. Residues Asn895 and Asn901 are each glycosylated (N-linked (GlcNAc...) asparagine). A discontinuously helical transmembrane segment spans residues 920–940 (YVGVADTLLALGFFRGLPLVH). Over 941-991 (TLITVSKILHHRMLHSVLRAPMSTLNMLKAGGILNRFSKDIAILDDLLPLT) the chain is Cytoplasmic. A helical membrane pass occupies residues 992–1012 (IFDFVQLLLIVIGAVAVVSVL). Topologically, residues 1013–1014 (QP) are extracellular. Residues 1015-1035 (YIFLATVPVIAAFVILRGYFL) form a helical membrane-spanning segment. The Cytoplasmic segment spans residues 1036 to 1096 (HTSQQLKQLE…TANWFLYLST (61 aa)). A helical membrane pass occupies residues 1097-1117 (LRWFQMRIEMIFVVFFIAVTF). Topologically, residues 1118–1131 (ISILTTGEGEGTVG) are extracellular. Residues 1132–1152 (IILTLAMNIMGTLQWAVNSSI) traverse the membrane as a helical segment. At 1153-1482 (DVDSLMRSVS…TEEEVQETRL (330 aa)) the chain is on the cytoplasmic side. The ABC transporter 2 domain maps to 1212–1445 (MTVKDLTARY…KSLFRQAISP (234 aa)). ATP is bound by residues Tyr1221 and 1246 to 1253 (GRTGAGKS). The interval 1388–1482 (RTLKQAFADC…TEEEVQETRL (95 aa)) is interaction with GORASP2. Cys1397 carries S-palmitoyl cysteine lipidation. Phosphoserine occurs at positions 1446 and 1458. The disordered stretch occupies residues 1450-1482 (KLFPRRNSSKHKSRSPITALKEETEEEVQETRL). Residues 1451–1463 (LFPRRNSSKHKSR) are compositionally biased toward basic residues. Residues 1472 to 1482 (ETEEEVQETRL) are compositionally biased toward acidic residues. The PDZ-binding motif lies at 1480 to 1482 (TRL).

This sequence belongs to the ABC transporter superfamily. ABCC family. CFTR transporter (TC 3.A.1.202) subfamily. As to quaternary structure, monomer; does not require oligomerization for channel activity. May form oligomers in the membrane. Interacts with SLC26A3, SLC26A6 and NHERF1. Interacts with SHANK2. Interacts with MYO6. Interacts (via C-terminus) with GOPC (via PDZ domain); this promotes CFTR internalization and thereby decreases channel activity. Interacts with SLC4A7 through NHERF1. Found in a complex with MYO5B and RAB11A. Interacts with ANO1. Interacts with SLC26A8. Interacts with AHCYL1; the interaction increases CFTR activity. Interacts with CSE1L. The core-glycosylated form interacts with GORASP2 (via PDZ GRASP-type 1 domain) in respone to ER stress. Interacts with MARCHF2; the interaction leads to CFTR ubiqtuitination and degradation. Interacts with ADGRG2. In terms of processing, N-glycosylated. Phosphorylated; cAMP treatment promotes phosphorylation and activates the channel. Dephosphorylation decreases the ATPase activity (in vitro). Phosphorylation at PKA sites activates the channel. Phosphorylation at PKC sites enhances the response to phosphorylation by PKA. Phosphorylated by AMPK; this inhibits channel activity. Post-translationally, ubiquitinated, leading to its degradation in the lysosome. Deubiquitination by USP10 in early endosomes enhances its endocytic recycling to the cell membrane. Ubiquitinated by RNF185 during ER stress. Ubiquitinated by MARCHF2.

Its subcellular location is the apical cell membrane. The protein localises to the early endosome membrane. It localises to the cell membrane. It is found in the recycling endosome membrane. The protein resides in the endoplasmic reticulum membrane. Its subcellular location is the nucleus. It catalyses the reaction ATP + H2O + closed Cl(-) channel = ADP + phosphate + open Cl(-) channel.. The catalysed reaction is chloride(in) = chloride(out). The enzyme catalyses hydrogencarbonate(in) = hydrogencarbonate(out). It carries out the reaction ATP + H2O = ADP + phosphate + H(+). In terms of biological role, epithelial ion channel that plays an important role in the regulation of epithelial ion and water transport and fluid homeostasis. Mediates the transport of chloride ions across the cell membrane. Possesses an intrinsic ATPase activity and utilizes ATP to gate its channel; the passive flow of anions through the channel is gated by cycles of ATP binding and hydrolysis by the ATP-binding domains. The ion channel is also permeable to HCO(3)(-); selectivity depends on the extracellular chloride concentration. Exerts its function also by modulating the activity of other ion channels and transporters. Contributes to the regulation of the pH and the ion content of the epithelial fluid layer. Modulates the activity of the epithelial sodium channel (ENaC) complex, in part by regulating the cell surface expression of the ENaC complex. May regulate bicarbonate secretion and salvage in epithelial cells by regulating the transporter SLC4A7. Can inhibit the chloride channel activity of ANO1. Plays a role in the chloride and bicarbonate homeostasis during sperm epididymal maturation and capacitation. The sequence is that of Cystic fibrosis transmembrane conductance regulator from Otolemur garnettii (Small-eared galago).